We begin with the raw amino-acid sequence, 855 residues long: Suppressor of tumorigenicity 14 protein homolog (855 aa).

The interval 1–21 (MKSERARRGAGGSGDLGAGFK) is disordered. Topologically, residues 1–55 (MKSERARRGAGGSGDLGAGFKYTSRPENMNGCEEGVEFLPANNSSKVEKGGPRRW) are cytoplasmic. Phosphoserine is present on serine 13. A helical; Signal-anchor for type II membrane protein transmembrane segment spans residues 56–76 (VVLMAVLAAFLALSLLAGLLA). Over 77–855 (WHFQDRNVRV…RDWIKAQIGV (779 aa)) the chain is Extracellular. The region spanning 86–203 (VQKIFNGYLS…TSVVAFPSDP (118 aa)) is the SEA domain. N-linked (GlcNAc...) asparagine glycosylation is present at asparagine 109. Cysteine 214 and cysteine 244 are disulfide-bonded. CUB domains are found at residues 214–334 (CSFA…FFQL) and 340–447 (CGGY…FLSF). N-linked (GlcNAc...) asparagine glycosylation is found at asparagine 302 and asparagine 365. 15 cysteine pairs are disulfide-bonded: cysteine 340-cysteine 366, cysteine 397-cysteine 410, cysteine 453-cysteine 464, cysteine 459-cysteine 477, cysteine 471-cysteine 486, cysteine 488-cysteine 501, cysteine 496-cysteine 514, cysteine 508-cysteine 523, cysteine 525-cysteine 537, cysteine 532-cysteine 550, cysteine 544-cysteine 559, cysteine 567-cysteine 579, cysteine 574-cysteine 593, cysteine 587-cysteine 602, and cysteine 641-cysteine 657. 4 LDL-receptor class A domains span residues 452–487 (PCPG…LDCK), 487–524 (KCNA…EGCS), 524–560 (SCPP…AKCQ), and 566–603 (PCTE…KDCD). An N-linked (GlcNAc...) asparagine glycan is attached at asparagine 489. In terms of domain architecture, Peptidase S1 spans 615-854 (VVGGENSDQG…FRDWIKAQIG (240 aa)). Catalysis depends on charge relay system residues histidine 656 and aspartate 711. N-linked (GlcNAc...) asparagine glycosylation is present at asparagine 772. Cystine bridges form between cysteine 776-cysteine 790 and cysteine 801-cysteine 830. Serine 805 functions as the Charge relay system in the catalytic mechanism.

Belongs to the peptidase S1 family. In terms of assembly, interacts with CDCP1. May interact with TMEFF1.

The protein localises to the membrane. It catalyses the reaction Cleaves various synthetic substrates with Arg or Lys at the P1 position and prefers small side-chain amino acids, such as Ala and Gly, at the P2 position.. In terms of biological role, exhibits trypsin-like activity as defined by cleavage of synthetic substrates with Arg or Lys as the P1 site. Involved in the terminal differentiation of keratinocytes through prostasin (PRSS8) activation and filaggrin (FLG) processing. Proteolytically cleaves and therefore activates TMPRSS13. The protein is Suppressor of tumorigenicity 14 protein homolog (ST14) of Bos taurus (Bovine).